We begin with the raw amino-acid sequence, 450 residues long: Phosphoglucosamine mutase (450 aa).

Ser-102 (phosphoserine intermediate) is an active-site residue. The Mg(2+) site is built by Ser-102, Asp-243, Asp-245, and Asp-247. Ser-102 carries the post-translational modification Phosphoserine.

This sequence belongs to the phosphohexose mutase family. It depends on Mg(2+) as a cofactor. Post-translationally, activated by phosphorylation.

The catalysed reaction is alpha-D-glucosamine 1-phosphate = D-glucosamine 6-phosphate. Catalyzes the conversion of glucosamine-6-phosphate to glucosamine-1-phosphate. In Rhizobium rhizogenes (strain K84 / ATCC BAA-868) (Agrobacterium radiobacter), this protein is Phosphoglucosamine mutase.